Reading from the N-terminus, the 351-residue chain is Photosystem II D2 protein 2 (351 aa).

The chain crosses the membrane as a helical span at residues 39 to 59; it reads CAFLSIGGWFTGTTFVTSWYT. Histidine 116 lines the chlorophyll a pocket. Residues 123 to 139 form a helical membrane-spanning segment; it reads GFMLRQFEIARLVNVRP. Pheophytin a-binding residues include glutamine 128 and asparagine 141. A helical membrane pass occupies residues 151–164; sequence VFVSVFLMYPLGQS. Histidine 196 is a binding site for chlorophyll a. The helical transmembrane segment at 206 to 226 threads the bilayer; sequence GALLCAIHGATVENTLFEDTK. Histidine 213 and phenylalanine 260 together coordinate a plastoquinone. Histidine 213 lines the Fe cation pocket. Histidine 267 is a Fe cation binding site. Residues 277 to 293 traverse the membrane as a helical segment; it reads GLWASAIGLVGIALNMR.

It belongs to the reaction center PufL/M/PsbA/D family. As to quaternary structure, PSII is composed of 1 copy each of membrane proteins PsbA, PsbB, PsbC, PsbD, PsbE, PsbF, PsbH, PsbI, PsbJ, PsbK, PsbL, PsbM, PsbT, PsbX, PsbY, PsbZ, Psb30/Ycf12, peripheral proteins PsbO, CyanoQ (PsbQ), PsbU, PsbV and a large number of cofactors. It forms dimeric complexes. The D1/D2 heterodimer binds P680, chlorophylls that are the primary electron donor of PSII, and subsequent electron acceptors. It shares a non-heme iron and each subunit binds pheophytin, quinone, additional chlorophylls, carotenoids and lipids. There is also a Cl(-1) ion associated with D1 and D2, which is required for oxygen evolution. The PSII complex binds additional chlorophylls, carotenoids and specific lipids. serves as cofactor.

It is found in the cellular thylakoid membrane. The catalysed reaction is 2 a plastoquinone + 4 hnu + 2 H2O = 2 a plastoquinol + O2. Functionally, photosystem II (PSII) is a light-driven water:plastoquinone oxidoreductase that uses light energy to abstract electrons from H(2)O, generating O(2) and a proton gradient subsequently used for ATP formation. It consists of a core antenna complex that captures photons, and an electron transfer chain that converts photonic excitation into a charge separation. The D1/D2 (PsbA/PsbD) reaction center heterodimer binds P680, the primary electron donor of PSII as well as several subsequent electron acceptors. D2 is needed for assembly of a stable PSII complex. This is Photosystem II D2 protein 2 from Acaryochloris marina (strain MBIC 11017).